A 99-amino-acid polypeptide reads, in one-letter code: MALTKAEMSEYLFEKLGLSKRDAKELVELFFEEVRRALENGEQVKLSGFGNFDLRDKNQRPGRNPKTGEDIPITARRVVTFRPGQKLKSRVENASPKES.

Positions N51–I71 are disordered.

This sequence belongs to the bacterial histone-like protein family. As to quaternary structure, heterodimer of an alpha and a beta chain.

This protein is one of the two subunits of integration host factor, a specific DNA-binding protein that functions in genetic recombination as well as in transcriptional and translational control. The sequence is that of Integration host factor subunit alpha (ihfA) from Dickeya dadantii (strain 3937) (Erwinia chrysanthemi (strain 3937)).